We begin with the raw amino-acid sequence, 376 residues long: UDP-N-acetylglucosamine 2-epimerase (376 aa).

Residues Arg-10, Lys-15, Asp-95, Glu-117, His-213, Gln-271, Phe-276, 290 to 292, Glu-296, and Arg-313 contribute to the substrate site; that span reads SGG.

Belongs to the UDP-N-acetylglucosamine 2-epimerase family. In terms of assembly, homodimer.

The protein localises to the cytoplasm. It carries out the reaction UDP-N-acetyl-alpha-D-glucosamine = UDP-N-acetyl-alpha-D-mannosamine. The protein operates within bacterial outer membrane biogenesis; enterobacterial common antigen biosynthesis. Its activity is regulated as follows. Allosterically activated by its substrate, UDP-GlcNAc. Catalyzes the reversible epimerization at C-2 of UDP-N-acetylglucosamine (UDP-GlcNAc) and thereby provides bacteria with UDP-N-acetylmannosamine (UDP-ManNAc), the activated donor of ManNAc residues. Also involved in bacteriophage N4 adsorption. In Escherichia coli (strain K12), this protein is UDP-N-acetylglucosamine 2-epimerase.